Here is a 341-residue protein sequence, read N- to C-terminus: Basic membrane protein B (341 aa).

The N-terminal stretch at 1–14 (MRIAIFIFGILLTS) is a signal peptide. The N-palmitoyl cysteine moiety is linked to residue Cys15. The S-diacylglycerol cysteine moiety is linked to residue Cys15.

This sequence belongs to the BMP lipoprotein family. In terms of assembly, monomer.

Its subcellular location is the cell inner membrane. Its function is as follows. May be part of an ABC-type nucleoside uptake system involved in the purine salvage pathway. The polypeptide is Basic membrane protein B (bmpB) (Borreliella afzelii (strain PKo) (Borrelia afzelii)).